The sequence spans 203 residues: Probable flagellin 1 (203 aa).

Residues 1-11 (MGMRFLKNEKG) constitute a propeptide that is removed on maturation.

Belongs to the archaeal flagellin family.

It localises to the archaeal flagellum. Its function is as follows. Flagellin is the subunit protein which polymerizes to form the filaments of archaeal flagella. The chain is Probable flagellin 1 (flaB1) from Archaeoglobus fulgidus (strain ATCC 49558 / DSM 4304 / JCM 9628 / NBRC 100126 / VC-16).